A 500-amino-acid polypeptide reads, in one-letter code: NF-kappa-B inhibitor cactus (500 aa).

Residues 1–43 (MPSPTKAAEAATKATATSDCSCSAASVEQRAPSNAANPSSSLA) show a composition bias toward low complexity. Disordered stretches follow at residues 1-148 (MPSP…MRLK) and 171-212 (LNNL…APPS). S45 bears the Phosphoserine; by PKC mark. Residues 69–86 (NETSDSGFISGPQSSQIF) are compositionally biased toward polar residues. The span at 118–130 (IIDEEEDQEEQEK) shows a compositional bias: acidic residues. S144 carries the post-translational modification Phosphoserine; by PKC. The segment covering 171–189 (LNNLGQSSSTQITGRSKVQ) has biased composition (polar residues). A Phosphothreonine; by PKC modification is found at T183. Over residues 190-212 (SSTASTANANPSGSGATSSAPPS) the composition is skewed to low complexity. 5 ANK repeats span residues 229–261 (DGDT…LLNI), 265–294 (VAQT…EPTV), 298–327 (HGNT…ATEI), 361–390 (DGER…DINA), and 395–424 (SGRT…KLNL). Phosphothreonine; by PKC occurs at positions 293 and 319. Position 395 is a phosphoserine; by PKC (S395).

It belongs to the NF-kappa-B inhibitor family. As to quaternary structure, phosphorylated isoform A binds to dorsal (dl); inhibits dl translocation to the nucleus and therefore from binding to DNA. In vitro, interacts with IKKbeta. Interacts with cactin and kappa-B-Ras. In terms of processing, activated IKKbeta phosphorylates cact. Expressed in ovary (at protein level).

The protein localises to the cytoplasm. Functionally, involved in the formation of the dorsoventral pattern. It inhibits nuclear translocation of the dorsal morphogen in the dorsal region of the embryo. Acts as a negative regulator of the NF-kappa-B (rel) signaling pathway. Cact is degraded by IKKbeta, this is essential for NF-kappa-B (rel) activation. The protein is NF-kappa-B inhibitor cactus (cact) of Drosophila melanogaster (Fruit fly).